A 905-amino-acid polypeptide reads, in one-letter code: Protein LONGIFOLIA 2 (905 aa).

Disordered regions lie at residues 42 to 136, 232 to 268, 285 to 315, 432 to 585, 606 to 626, and 690 to 711; these read VSGG…GGLM, RLSL…RSSS, DTEQ…SRSV, STSP…SDSN, CDFP…IKQD, and VPFP…ECSP. Residues 65 to 74 are compositionally biased toward basic and acidic residues; it reads ESDKETERSS. A compositionally biased stretch (low complexity) spans 90–117; sequence FESSSRPSFSSSPRSSSFSSAEVSTTAS. Basic and acidic residues predominate over residues 286 to 296; sequence TEQRRENRFCD. Polar residues-rich tracts occupy residues 432 to 461, 477 to 487, and 501 to 516; these read STSP…SGKQ, LDSTKSNSPKT, and MTKS…SPRT. Over residues 566-581 the composition is skewed to basic and acidic residues; it reads PDDRLSDARSDLRSLR.

In terms of assembly, interacts (via C-terminus) with TON1A and TON1B.

Its subcellular location is the cytoplasm. The protein localises to the cytoskeleton. In terms of biological role, in association with LNG1, regulates leaf morphology by promoting longitudinal polar cell elongation independently of ROT3. Associates with microtubules and recruits TON1A and TON1B to the cytoskeleton through its C-terminus. In Arabidopsis thaliana (Mouse-ear cress), this protein is Protein LONGIFOLIA 2 (LNG2).